The following is a 364-amino-acid chain: tRNA 2-selenouridine synthase (364 aa).

The 124-residue stretch at 14–137 folds into the Rhodanese domain; sequence LIADTPIIDV…LRQTAIQATI (124 aa). Cysteine 97 functions as the S-selanylcysteine intermediate in the catalytic mechanism.

The protein belongs to the SelU family. In terms of assembly, monomer.

It carries out the reaction 5-methylaminomethyl-2-thiouridine(34) in tRNA + selenophosphate + (2E)-geranyl diphosphate + H2O + H(+) = 5-methylaminomethyl-2-selenouridine(34) in tRNA + (2E)-thiogeraniol + phosphate + diphosphate. The catalysed reaction is 5-methylaminomethyl-2-thiouridine(34) in tRNA + (2E)-geranyl diphosphate = 5-methylaminomethyl-S-(2E)-geranyl-thiouridine(34) in tRNA + diphosphate. It catalyses the reaction 5-methylaminomethyl-S-(2E)-geranyl-thiouridine(34) in tRNA + selenophosphate + H(+) = 5-methylaminomethyl-2-(Se-phospho)selenouridine(34) in tRNA + (2E)-thiogeraniol. The enzyme catalyses 5-methylaminomethyl-2-(Se-phospho)selenouridine(34) in tRNA + H2O = 5-methylaminomethyl-2-selenouridine(34) in tRNA + phosphate. Functionally, involved in the post-transcriptional modification of the uridine at the wobble position (U34) of tRNA(Lys), tRNA(Glu) and tRNA(Gln). Catalyzes the conversion of 2-thiouridine (S2U-RNA) to 2-selenouridine (Se2U-RNA). Acts in a two-step process involving geranylation of 2-thiouridine (S2U) to S-geranyl-2-thiouridine (geS2U) and subsequent selenation of the latter derivative to 2-selenouridine (Se2U) in the tRNA chain. The polypeptide is tRNA 2-selenouridine synthase (Escherichia coli (strain K12 / MC4100 / BW2952)).